The sequence spans 316 residues: Bifunctional peptidase and (3S)-lysyl hydroxylase JMJD7 (316 aa).

The region spanning 128 to 307 is the JmjC domain; that stretch reads VQKQCSNLPS…LKYSYFQLLD (180 aa). Positions 178, 180, and 277 each coordinate Fe cation.

In terms of assembly, homodimer; disulfide-linked. Interacts with DRG1 and DRG2. Fe(2+) is required as a cofactor.

The protein resides in the nucleus. The protein localises to the cytoplasm. It catalyses the reaction L-lysyl-[protein] + 2-oxoglutarate + O2 = (3S)-3-hydroxy-L-lysyl-[protein] + succinate + CO2. In terms of biological role, bifunctional enzyme that acts both as an endopeptidase and 2-oxoglutarate-dependent monooxygenase. Endopeptidase that cleaves histones N-terminal tails at the carboxyl side of methylated arginine or lysine residues, to generate 'tailless nucleosomes', which may trigger transcription elongation. Preferentially recognizes and cleaves monomethylated and dimethylated arginine residues of histones H2, H3 and H4. After initial cleavage, continues to digest histones tails via its aminopeptidase activity. Additionally, may play a role in protein biosynthesis by modifying the translation machinery. Acts as a Fe(2+) and 2-oxoglutarate-dependent monooxygenase, catalyzing (S)-stereospecific hydroxylation at C-3 of 'Lys-22' of DRG1 and 'Lys-21' of DRG2 translation factors (TRAFAC), promoting their interaction with ribonucleic acids (RNA). The polypeptide is Bifunctional peptidase and (3S)-lysyl hydroxylase JMJD7 (Homo sapiens (Human)).